Reading from the N-terminus, the 259-residue chain is Translation initiation factor IF-2, chloroplastic (259 aa).

Residues 171 to 259 enclose the tr-type G domain; the sequence is LRAPIVAVLG…LLIIAADEGI (89 aa). 180–187 contacts GTP; sequence GHVNHGKT.

Belongs to the TRAFAC class translation factor GTPase superfamily. Classic translation factor GTPase family. IF-2 subfamily.

It localises to the plastid. The protein resides in the chloroplast. Functionally, one of the essential components for the initiation of protein synthesis. Protects formylmethionyl-tRNA from spontaneous hydrolysis and promotes its binding to the 30S ribosomal subunits. Also involved in the hydrolysis of GTP during the formation of the 70S ribosomal complex. The sequence is that of Translation initiation factor IF-2, chloroplastic (infB) from Galdieria sulphuraria (Red alga).